Consider the following 239-residue polypeptide: Peptidyl-tRNA hydrolase (239 aa).

Position 14 (Y14) interacts with tRNA. H19 functions as the Proton acceptor in the catalytic mechanism. Residues F64, N66, and N112 each coordinate tRNA. A disordered region spans residues G188–P225.

The protein belongs to the PTH family. Monomer.

Its subcellular location is the cytoplasm. It carries out the reaction an N-acyl-L-alpha-aminoacyl-tRNA + H2O = an N-acyl-L-amino acid + a tRNA + H(+). Its function is as follows. Hydrolyzes ribosome-free peptidyl-tRNAs (with 1 or more amino acids incorporated), which drop off the ribosome during protein synthesis, or as a result of ribosome stalling. In terms of biological role, catalyzes the release of premature peptidyl moieties from peptidyl-tRNA molecules trapped in stalled 50S ribosomal subunits, and thus maintains levels of free tRNAs and 50S ribosomes. The polypeptide is Peptidyl-tRNA hydrolase (Sinorhizobium fredii (strain NBRC 101917 / NGR234)).